The following is a 345-amino-acid chain: Alkaline phosphatase isozyme conversion protein (345 aa).

A signal peptide spans 1-24 (MFSALRHRTAALALGVCFILPVHA). 4 residues coordinate Zn(2+): His-117, Asp-143, Glu-176, and Asp-204.

The protein belongs to the peptidase M28 family. M28C subfamily.

This protein, presumably an aminopeptidase, mediates the conversion of E.coli alkaline phosphatase isozyme 1, to isozymes 2 and 3 by removing, one by one, the two N-terminal arginine residues. This chain is Alkaline phosphatase isozyme conversion protein (iap), found in Escherichia coli (strain K12).